Consider the following 101-residue polypeptide: Urease subunit beta (101 aa).

It belongs to the urease beta subunit family. Heterotrimer of UreA (gamma), UreB (beta) and UreC (alpha) subunits. Three heterotrimers associate to form the active enzyme.

Its subcellular location is the cytoplasm. It carries out the reaction urea + 2 H2O + H(+) = hydrogencarbonate + 2 NH4(+). It functions in the pathway nitrogen metabolism; urea degradation; CO(2) and NH(3) from urea (urease route): step 1/1. The chain is Urease subunit beta from Actinobacillus pleuropneumoniae serotype 5b (strain L20).